The sequence spans 485 residues: Alpha,alpha-trehalose-phosphate synthase [UDP-forming] (485 aa).

Y99 and D153 together coordinate D-glucose 6-phosphate. The UDP site is built by R290 and K295. UDP-alpha-D-glucose contacts are provided by R290 and K295. Residue R328 participates in D-glucose 6-phosphate binding. UDP is bound by residues I367 and 393-397 (LVSYE). UDP-alpha-D-glucose-binding positions include I367 and 389–397 (DGMNLVSYE).

It belongs to the glycosyltransferase 20 family.

The enzyme catalyses D-glucose 6-phosphate + UDP-alpha-D-glucose = alpha,alpha-trehalose 6-phosphate + UDP + H(+). It functions in the pathway carbohydrate biosynthesis. Functionally, synthase catalytic subunit of the trehalose synthase complex that catalyzes the production of trehalose from glucose-6-phosphate and UDP-alpha-D-glucose in a two step process. The polypeptide is Alpha,alpha-trehalose-phosphate synthase [UDP-forming] (Zygosaccharomyces rouxii).